The sequence spans 176 residues: N-alpha-acetyltransferase NAT5 (176 aa).

Positions Asn-14 to Ser-176 constitute an N-acetyltransferase domain.

It belongs to the acetyltransferase family. As to quaternary structure, component of the N-terminal acetyltransferase A (NatA) complex, which is composed of ARD1, NAT1 and NAT5.

The protein localises to the cytoplasm. The catalysed reaction is N-terminal L-methionyl-L-alanyl-[protein] + acetyl-CoA = N-terminal N(alpha)-acetyl-L-methionyl-L-alanyl-[protein] + CoA + H(+). It catalyses the reaction N-terminal L-methionyl-L-seryl-[protein] + acetyl-CoA = N-terminal N(alpha)-acetyl-L-methionyl-L-seryl-[protein] + CoA + H(+). It carries out the reaction N-terminal L-methionyl-L-valyl-[protein] + acetyl-CoA = N-terminal N(alpha)-acetyl-L-methionyl-L-valyl-[protein] + CoA + H(+). The enzyme catalyses N-terminal L-methionyl-L-threonyl-[protein] + acetyl-CoA = N-terminal N(alpha)-acetyl-L-methionyl-L-threonyl-[protein] + CoA + H(+). The catalysed reaction is N-terminal L-methionyl-L-lysyl-[protein] + acetyl-CoA = N-terminal N(alpha)-acetyl-L-methionyl-L-lysyl-[protein] + CoA + H(+). It catalyses the reaction N-terminal L-methionyl-L-leucyl-[protein] + acetyl-CoA = N-terminal N(alpha)-acetyl-L-methionyl-L-leucyl-[protein] + CoA + H(+). It carries out the reaction N-terminal L-methionyl-L-phenylalanyl-[protein] + acetyl-CoA = N-terminal N(alpha)-acetyl-L-methionyl-L-phenylalanyl-[protein] + CoA + H(+). The enzyme catalyses N-terminal L-methionyl-L-tyrosyl-[protein] + acetyl-CoA = N-terminal N(alpha)-acetyl-L-methionyl-L-tyrosyl-[protein] + CoA + H(+). Its function is as follows. N-alpha-acetyltransferase that acetylates the N-terminus of proteins that retain their initiating methionine. Has a broad substrate specificity: able to acetylate the initiator methionine of most peptides. Non-essential component of the NatA N-terminal acetyltransferase. The sequence is that of N-alpha-acetyltransferase NAT5 from Saccharomyces cerevisiae (strain ATCC 204508 / S288c) (Baker's yeast).